The primary structure comprises 219 residues: 2-phospho-L-lactate guanylyltransferase (219 aa).

Belongs to the CofC family. In terms of assembly, homodimer.

It catalyses the reaction (2S)-2-phospholactate + GTP + H(+) = (2S)-lactyl-2-diphospho-5'-guanosine + diphosphate. It participates in cofactor biosynthesis; coenzyme F420 biosynthesis. Functionally, guanylyltransferase that catalyzes the activation of (2S)-2-phospholactate (2-PL) as (2S)-lactyl-2-diphospho-5'-guanosine, via the condensation of 2-PL with GTP. It is involved in the biosynthesis of coenzyme F420, a hydride carrier cofactor. In Methanocella arvoryzae (strain DSM 22066 / NBRC 105507 / MRE50), this protein is 2-phospho-L-lactate guanylyltransferase.